Consider the following 225-residue polypeptide: C-type lectin domain-containing protein 91 (225 aa).

A signal peptide spans Met1–Ala21. The C-type lectin domain maps to Tyr85–Glu215. Disulfide bonds link Cys106-Cys214 and Cys185-Cys206. The N-linked (GlcNAc...) asparagine glycan is linked to Asn217.

The protein resides in the secreted. This Caenorhabditis elegans protein is C-type lectin domain-containing protein 91 (clec-91).